Reading from the N-terminus, the 116-residue chain is Nucleoid-associated protein SACE_0254 (116 aa).

The disordered stretch occupies residues 90–116 (LQQEKMGPVTGALGGGQGLGGLGLPGL). Gly residues predominate over residues 101-116 (ALGGGQGLGGLGLPGL).

This sequence belongs to the YbaB/EbfC family. As to quaternary structure, homodimer.

It is found in the cytoplasm. Its subcellular location is the nucleoid. In terms of biological role, binds to DNA and alters its conformation. May be involved in regulation of gene expression, nucleoid organization and DNA protection. The polypeptide is Nucleoid-associated protein SACE_0254 (Saccharopolyspora erythraea (strain ATCC 11635 / DSM 40517 / JCM 4748 / NBRC 13426 / NCIMB 8594 / NRRL 2338)).